Consider the following 404-residue polypeptide: F-box protein At3g57590 (404 aa).

The region spanning 1–47 (MEPIPNDLILEIFSRLPAKSVIGFRTLSKHWASILRSPVFTELFLTR) is the F-box domain.

This Arabidopsis thaliana (Mouse-ear cress) protein is F-box protein At3g57590.